A 125-amino-acid chain; its full sequence is Morphine 6-dehydrogenase (125 aa).

NADP(+) contacts are provided by residues 9–18 (GHSIPVLGFI) and 74–111 (SALG…IERE).

The protein belongs to the aldo/keto reductase family. As to quaternary structure, monomer. Post-translationally, the N-terminus is blocked.

It localises to the cytoplasm. It catalyses the reaction morphine + NAD(+) = morphinone + NADH + H(+). The catalysed reaction is morphine + NADP(+) = morphinone + NADPH + H(+). With respect to regulation, strongly inhibited by sulfhydryl reagents and quercetin, but not by pyrazole, barbital and indomethacine. Functionally, catalyzes the dehydrogenation of morphine to morphinone. Uses both NAD and NADP, but the activity is much greater with NAD than with NADP. In Oryctolagus cuniculus (Rabbit), this protein is Morphine 6-dehydrogenase.